Here is a 189-residue protein sequence, read N- to C-terminus: Protein GrpE (189 aa).

Residues 1–20 (MSDQQHSAPQNAAATASPSD) show a composition bias toward polar residues. The disordered stretch occupies residues 1–29 (MSDQQHSAPQNAAATASPSDSPEAVEATM).

The protein belongs to the GrpE family. As to quaternary structure, homodimer.

It localises to the cytoplasm. Participates actively in the response to hyperosmotic and heat shock by preventing the aggregation of stress-denatured proteins, in association with DnaK and GrpE. It is the nucleotide exchange factor for DnaK and may function as a thermosensor. Unfolded proteins bind initially to DnaJ; upon interaction with the DnaJ-bound protein, DnaK hydrolyzes its bound ATP, resulting in the formation of a stable complex. GrpE releases ADP from DnaK; ATP binding to DnaK triggers the release of the substrate protein, thus completing the reaction cycle. Several rounds of ATP-dependent interactions between DnaJ, DnaK and GrpE are required for fully efficient folding. This Paracidovorax citrulli (strain AAC00-1) (Acidovorax citrulli) protein is Protein GrpE.